The primary structure comprises 356 residues: S-adenosylmethionine:tRNA ribosyltransferase-isomerase (356 aa).

It belongs to the QueA family. Monomer.

The protein resides in the cytoplasm. The catalysed reaction is 7-aminomethyl-7-carbaguanosine(34) in tRNA + S-adenosyl-L-methionine = epoxyqueuosine(34) in tRNA + adenine + L-methionine + 2 H(+). It functions in the pathway tRNA modification; tRNA-queuosine biosynthesis. Its function is as follows. Transfers and isomerizes the ribose moiety from AdoMet to the 7-aminomethyl group of 7-deazaguanine (preQ1-tRNA) to give epoxyqueuosine (oQ-tRNA). The protein is S-adenosylmethionine:tRNA ribosyltransferase-isomerase of Citrobacter koseri (strain ATCC BAA-895 / CDC 4225-83 / SGSC4696).